A 295-amino-acid chain; its full sequence is Phosphoserine phosphatase, chloroplastic (295 aa).

Residues 1-54 constitute a chloroplast transit peptide; that stretch reads MEALTTSRVVPVQVPCRKLSSLFANFSCLELRRYPCRGLVSIMNHPKLLRPVTA. The Nucleophile role is filled by Asp-89. Positions 89 and 91 each coordinate Mg(2+). The Proton donor role is filled by Asp-91. Substrate contacts are provided by residues Glu-98, Arg-134, 178–179, and Lys-227; that span reads SG. Mg(2+) is bound at residue Asp-248.

This sequence belongs to the HAD-like hydrolase superfamily. SerB family. The cofactor is Mg(2+). In terms of tissue distribution, ubiquitous. Mainly expressed in shoot and root meristems, vasculature, pollen, anthers, carpels and seeds.

Its subcellular location is the plastid. It is found in the chloroplast. It catalyses the reaction O-phospho-L-serine + H2O = L-serine + phosphate. It carries out the reaction O-phospho-D-serine + H2O = D-serine + phosphate. Its pathway is amino-acid biosynthesis; L-serine biosynthesis; L-serine from 3-phospho-D-glycerate: step 3/3. Its activity is regulated as follows. Approximately 60% inhibition of PSP activity is observed in presence of 10 mM serine. Catalyzes the last step in the plastidial phosphorylated pathway of serine biosynthesis (PPSB). The reaction mechanism proceeds via the formation of a phosphoryl-enzyme intermediates. Required for embryo, pollen and root development. May be required preferentially for serine biosynthesis in non-photosynthetic tissues. The chain is Phosphoserine phosphatase, chloroplastic (PSP) from Arabidopsis thaliana (Mouse-ear cress).